A 1604-amino-acid chain; its full sequence is Calmodulin-regulated spectrin-associated protein 1 (1604 aa).

Residue serine 216 is modified to Phosphoserine. One can recognise a Calponin-homology (CH) domain in the interval 235-350 (PVDFARVVRY…FIAELFWWFE (116 aa)). Phosphoserine is present on residues serine 390, serine 394, and serine 435. The segment at 394 to 413 (SPAAMSPADLPPSTQPLTEG) is disordered. The disordered stretch occupies residues 444–491 (RQKQQKVSQAEEIPDQRHRSNSLTRADGQPRGAAIAWPDKKNRPVSQP). Threonine 531 is subject to Phosphothreonine. Residues serine 571, serine 574, serine 581, serine 593, serine 607, serine 647, serine 739, serine 745, serine 755, and serine 757 each carry the phosphoserine modification. The segment at 642–671 (MAKRPSEGSQPLVRKKVTGSHGSRDLNRTF) is disordered. A compositionally biased stretch (basic and acidic residues) spans 784-806 (EEESAKLQEDMKVKEHEDKDDAS). Disordered regions lie at residues 784–824 (EEES…SMSM) and 842–888 (LNSC…KDPA). 2 stretches are compositionally biased toward low complexity: residues 813-824 (LSTTSQLSSMSM) and 847-858 (TKSSTSSSQKTT). Basic and acidic residues predominate over residues 874–886 (QKREQSPSRHSKD). A sufficient for interaction with SPTBN1 region spans residues 888–909 (ASLLASELVQLHMQLEEKRRAI). 2 coiled-coil regions span residues 890-926 (LLAS…QRLK) and 1026-1058 (DVNE…QEQL). The tract at residues 920-939 (SARQRLKLGKAAFLHVVKKG) is sufficient for interaction with calmodulin. Disordered regions lie at residues 1085–1163 (FVEP…GELP), 1246–1271 (PDED…KPGV), and 1298–1448 (RKAE…DRDW). Position 1090 is a phosphoserine (serine 1090). Residues 1113–1124 (RPAELKVPKDRQ) are compositionally biased toward basic and acidic residues. Polar residues predominate over residues 1125 to 1137 (QGCSRSKTPTPSV). Serine 1154 is subject to Phosphoserine. Composition is skewed to basic and acidic residues over residues 1246 to 1258 (PDED…HESS) and 1298 to 1348 (RKAE…EYLR). A coiled-coil region spans residues 1286 to 1357 (AKKRAAFLLK…RRKQQQALEE (72 aa)). A compositionally biased stretch (basic residues) spans 1363–1374 (PKSKPKKPRPKS). Over residues 1382 to 1394 (SDSGTKCSSTPDN) the composition is skewed to polar residues. Residues 1395–1412 (LSQTHSGSSLSLASAATT) show a composition bias toward low complexity. A phosphoserine mark is found at serine 1400 and serine 1429. The 135-residue stretch at 1465–1599 (GPKLFKEPSS…QPKRPTVPKK (135 aa)) folds into the CKK domain. The residue at position 1539 (tyrosine 1539) is a Phosphotyrosine.

This sequence belongs to the CAMSAP1 family. Interacts with spectrin via SPTBN1; the interaction is direct. Interacts with calmodulin; calcium-dependent it prevents interaction with spectrin. In terms of tissue distribution, in brain, specifically expressed in astrocytes (at protein level).

The protein localises to the cytoplasm. Its subcellular location is the cytoskeleton. Functionally, key microtubule-organizing protein that specifically binds the minus-end of non-centrosomal microtubules and regulates their dynamics and organization. Specifically recognizes growing microtubule minus-ends and stabilizes microtubules. Acts on free microtubule minus-ends that are not capped by microtubule-nucleating proteins or other factors and protects microtubule minus-ends from depolymerization. In contrast to CAMSAP2 and CAMSAP3, tracks along the growing tips of minus-end microtubules without significantly affecting the polymerization rate: binds at the very tip of the microtubules minus-end and acts as a minus-end tracking protein (-TIP) that dissociates from microtubules after allowing tubulin incorporation. Through interaction with spectrin may regulate neurite outgrowth. This chain is Calmodulin-regulated spectrin-associated protein 1 (Camsap1), found in Rattus norvegicus (Rat).